Here is a 172-residue protein sequence, read N- to C-terminus: S-ribosylhomocysteine lyase (172 aa).

His54, His58, and Cys128 together coordinate Fe cation.

Belongs to the LuxS family. In terms of assembly, homodimer. Fe cation is required as a cofactor.

The catalysed reaction is S-(5-deoxy-D-ribos-5-yl)-L-homocysteine = (S)-4,5-dihydroxypentane-2,3-dione + L-homocysteine. Involved in the synthesis of autoinducer 2 (AI-2) which is secreted by bacteria and is used to communicate both the cell density and the metabolic potential of the environment. The regulation of gene expression in response to changes in cell density is called quorum sensing. Catalyzes the transformation of S-ribosylhomocysteine (RHC) to homocysteine (HC) and 4,5-dihydroxy-2,3-pentadione (DPD). The sequence is that of S-ribosylhomocysteine lyase from Vibrio atlanticus (strain LGP32) (Vibrio splendidus (strain Mel32)).